A 134-amino-acid chain; its full sequence is Large ribosomal subunit protein bL17 (134 aa).

Belongs to the bacterial ribosomal protein bL17 family. Part of the 50S ribosomal subunit. Contacts protein L32.

In Paracidovorax citrulli (strain AAC00-1) (Acidovorax citrulli), this protein is Large ribosomal subunit protein bL17.